We begin with the raw amino-acid sequence, 718 residues long: Centromere/kinetochore protein zw10 (718 aa).

The protein belongs to the ZW10 family.

It localises to the cytoplasm. Its subcellular location is the nucleus. The protein localises to the chromosome. It is found in the centromere. The protein resides in the kinetochore. In terms of biological role, required for accurate chromosome segregation. This is Centromere/kinetochore protein zw10 (mit(1)15) from Drosophila pseudoobscura pseudoobscura (Fruit fly).